Here is a 467-residue protein sequence, read N- to C-terminus: Cysteine--tRNA ligase (467 aa).

C27 lines the Zn(2+) pocket. A 'HIGH' region motif is present at residues 29-39 (ATVQGLPHIGH). The Zn(2+) site is built by C209, H234, and E238. The 'KMSKS' region signature appears at 265–269 (KMSKS). K268 contributes to the ATP binding site.

This sequence belongs to the class-I aminoacyl-tRNA synthetase family. In terms of assembly, monomer. Zn(2+) serves as cofactor.

It is found in the cytoplasm. It catalyses the reaction tRNA(Cys) + L-cysteine + ATP = L-cysteinyl-tRNA(Cys) + AMP + diphosphate. This Mycolicibacterium gilvum (strain PYR-GCK) (Mycobacterium gilvum (strain PYR-GCK)) protein is Cysteine--tRNA ligase.